The following is a 299-amino-acid chain: Troponin T, cardiac muscle (299 aa).

Residues 1 to 71 are compositionally biased toward acidic residues; that stretch reads MSDAEEEVVE…EARDAEDGPV (71 aa). Disordered stretches follow at residues 1–97 and 137–220; these read MSDA…GERV and DRIE…EKKK. Serine 2 bears the N-acetylserine mark. Serine 2 carries the post-translational modification Phosphoserine. 2 stretches are compositionally biased toward basic and acidic residues: residues 137-185 and 204-220; these read DRIE…DEAR and QTER…EKKK. Threonine 205 carries the phosphothreonine; by PKC/PRKCA modification. Serine 209 carries the post-translational modification Phosphoserine; by PKC/PRKCA. Position 214 is a phosphothreonine; by PKC/PRKCA and RAF1 (threonine 214). The residue at position 295 (threonine 295) is a Phosphothreonine; by PKC/PRKCA.

Belongs to the troponin T family. Phosphorylation at Thr-214 by PRKCA induces significant reduction in myofilament calcium sensitivity and actomyosin ATPase activity.

Functionally, troponin T is the tropomyosin-binding subunit of troponin, the thin filament regulatory complex which confers calcium-sensitivity to striated muscle actomyosin ATPase activity. This is Troponin T, cardiac muscle (Tnnt2) from Rattus norvegicus (Rat).